Consider the following 496-residue polypeptide: Glutamyl-tRNA(Gln) amidotransferase subunit A (496 aa).

Active-site charge relay system residues include Lys75 and Ser150. The Acyl-ester intermediate role is filled by Ser174.

Belongs to the amidase family. GatA subfamily. Heterotrimer of A, B and C subunits.

The enzyme catalyses L-glutamyl-tRNA(Gln) + L-glutamine + ATP + H2O = L-glutaminyl-tRNA(Gln) + L-glutamate + ADP + phosphate + H(+). Its function is as follows. Allows the formation of correctly charged Gln-tRNA(Gln) through the transamidation of misacylated Glu-tRNA(Gln) in organisms which lack glutaminyl-tRNA synthetase. The reaction takes place in the presence of glutamine and ATP through an activated gamma-phospho-Glu-tRNA(Gln). In Burkholderia cenocepacia (strain HI2424), this protein is Glutamyl-tRNA(Gln) amidotransferase subunit A.